Consider the following 384-residue polypeptide: Putative glutamate--cysteine ligase 2 (384 aa).

The protein belongs to the glutamate--cysteine ligase type 2 family. YbdK subfamily.

The enzyme catalyses L-cysteine + L-glutamate + ATP = gamma-L-glutamyl-L-cysteine + ADP + phosphate + H(+). Its function is as follows. ATP-dependent carboxylate-amine ligase which exhibits weak glutamate--cysteine ligase activity. The protein is Putative glutamate--cysteine ligase 2 of Dechloromonas aromatica (strain RCB).